A 299-amino-acid polypeptide reads, in one-letter code: 6-phosphogluconate dehydrogenase, NAD(+)-dependent, decarboxylating (299 aa).

Residues 7–12, 67–69, and Asn95 each bind NAD(+); these read GLGRMG and VPA. Substrate is bound by residues Asn95, Ser118, and Gly120. The active-site Proton acceptor is the Lys169. 172-173 is a substrate binding site; the sequence is HN. Glu176 (proton donor) is an active-site residue. Substrate-binding residues include Tyr177 and Arg268.

Belongs to the 6-phosphogluconate dehydrogenase family. Homotetramer.

The enzyme catalyses 6-phospho-D-gluconate + NAD(+) = D-ribulose 5-phosphate + CO2 + NADH. It participates in carbohydrate degradation; pentose phosphate pathway. Catalyzes the oxidative decarboxylation of 6-phosphogluconate to ribulose 5-phosphate and CO(2), with concomitant reduction of NAD to NADH. This chain is 6-phosphogluconate dehydrogenase, NAD(+)-dependent, decarboxylating, found in Haloferax volcanii (strain ATCC 29605 / DSM 3757 / JCM 8879 / NBRC 14742 / NCIMB 2012 / VKM B-1768 / DS2) (Halobacterium volcanii).